Reading from the N-terminus, the 93-residue chain is M-zodatoxin-Lt5a (93 aa).

A signal peptide spans 1-22; sequence MKYCVVILALLVALVCITESRS. Residues 23–64 constitute a propeptide that is removed on maturation; the sequence is TETGYAVAETLEDNDLDELQAYLEEIAEASEMEDFSNIEEAR. Residues 61 to 64 carry the Processing quadruplet motif motif; the sequence is EEAR. L92 is modified (leucine amide).

Post-translationally, cleavage of the propeptide depends on the processing quadruplet motif (XXXR, with at least one of X being E). Expressed by the venom gland.

The protein resides in the secreted. Has antimicrobial activity against. Gram-positive bacteria (A.globiformis VKM Ac-1112 (MIC=1.1 uM), and B.subtilis VKM B-501 (MIC=0.6 uM)), Gram-negative bacteria (E.coli DH5-alpha (MIC=0.6 uM), E.coli MH1 (MIC=0.6 uM), and P.aeruginosa PAO1 (MIC=18 uM)), and yeasts (P.pastoris GS115 (MIC&gt;37 uM), and S.cerevisiae Y190 (MIC&gt;37 uM)). Also has a moderate hemolytic activity against rabbit erythrocytes. Causes paralysis, but is not lethal when injected into insect (M.domestica) larvae. This Lachesana tarabaevi (Spider) protein is M-zodatoxin-Lt5a.